Reading from the N-terminus, the 122-residue chain is Large ribosomal subunit protein uL14 (122 aa).

This sequence belongs to the universal ribosomal protein uL14 family. As to quaternary structure, part of the 50S ribosomal subunit. Forms a cluster with proteins L3 and L19. In the 70S ribosome, L14 and L19 interact and together make contacts with the 16S rRNA in bridges B5 and B8.

In terms of biological role, binds to 23S rRNA. Forms part of two intersubunit bridges in the 70S ribosome. The polypeptide is Large ribosomal subunit protein uL14 (Variovorax paradoxus (strain S110)).